Reading from the N-terminus, the 345-residue chain is uncharacterized protein (345 aa).

The 198-residue stretch at 1–198 (MDVLSAVLLA…LSEGLLDHEE (198 aa)) folds into the CNNM transmembrane domain. 2 consecutive transmembrane segments (helical) span residues 3–23 (VLSA…FVGA) and 95–115 (VPPA…HVLL). CBS domains are found at residues 217-280 (AVPL…PQTV) and 285-342 (VVRP…MRDG). A helical membrane pass occupies residues 312-332 (LALVTADNGSVVGMVALEDVV).

Belongs to the TerC family.

It localises to the cell membrane. This is an uncharacterized protein from Mycobacterium tuberculosis (strain CDC 1551 / Oshkosh).